Reading from the N-terminus, the 217-residue chain is Putative thymidylate synthase (217 aa).

Residue cysteine 139 is part of the active site.

Belongs to the thymidylate synthase family. Archaeal-type ThyA subfamily. Monomer.

It localises to the cytoplasm. It functions in the pathway pyrimidine metabolism; dTTP biosynthesis. May catalyze the biosynthesis of dTMP using an unknown cosubstrate. The sequence is that of Putative thymidylate synthase from Methanococcoides burtonii (strain DSM 6242 / NBRC 107633 / OCM 468 / ACE-M).